The primary structure comprises 259 residues: MLIKEYRMVLPLTVEEYQIAQLYMVAKKSKESTKGGEGIEIIKNEPFDNEKGKGQYTEKIIYLANSLPRFAAAILPSSALKIEEKAWNAYPYCKTEYSCPFFGEKLVLSIESMHLPGRGEVENALKCDAETLKQRHVDFIDIANDQPKEYIKEEDPKIFKSVKTERGPLDDPKWRDKVEPVMTCYKLVHAEFKYWGFQTKVENVIQDTGVRDVLLKAHRALFCWIDEWFGLTIEDIRKIEEETKAELAKKLEENKAANK.

A coiled-coil region spans residues 231 to 259; that stretch reads LTIEDIRKIEEETKAELAKKLEENKAANK.

This sequence belongs to the PtdIns transfer protein family. PI transfer class IIA subfamily.

It is found in the cytoplasm. The protein localises to the golgi apparatus. Catalyzes the transfer of PtdIns and phosphatidylcholine between membranes. In Dictyostelium discoideum (Social amoeba), this protein is Phosphatidylinositol transfer protein 2 (pitB).